Here is a 199-residue protein sequence, read N- to C-terminus: Recombination protein RecR (199 aa).

Residues 57–72 (CSICGNITESDPCMIC) form a C4-type zinc finger. The Toprim domain occupies 80-176 (SKVVVVEQPK…KVTRLAHGLA (97 aa)).

The protein belongs to the RecR family.

Functionally, may play a role in DNA repair. It seems to be involved in an RecBC-independent recombinational process of DNA repair. It may act with RecF and RecO. The sequence is that of Recombination protein RecR from Ligilactobacillus salivarius (strain UCC118) (Lactobacillus salivarius).